Consider the following 576-residue polypeptide: Arginine--tRNA ligase (576 aa).

A 'HIGH' region motif is present at residues 122-132 (PNVAKQMHVGH).

The protein belongs to the class-I aminoacyl-tRNA synthetase family. In terms of assembly, monomer.

The protein resides in the cytoplasm. It carries out the reaction tRNA(Arg) + L-arginine + ATP = L-arginyl-tRNA(Arg) + AMP + diphosphate. This Photorhabdus laumondii subsp. laumondii (strain DSM 15139 / CIP 105565 / TT01) (Photorhabdus luminescens subsp. laumondii) protein is Arginine--tRNA ligase.